The primary structure comprises 287 residues: U-megalopygitoxin(8)-Mo12 (287 aa).

Residues M1–G17 form the signal peptide. H284 carries the post-translational modification Histidine amide.

Belongs to the megalysin family. Post-translationally, contains 2 disulfide bonds. In terms of tissue distribution, expressed by the venom apparatus.

It is found in the secreted. Its subcellular location is the target cell membrane. May function as a large pore-forming protein. In Megalopyge opercularis (Southern flannel moth), this protein is U-megalopygitoxin(8)-Mo12.